A 528-amino-acid chain; its full sequence is Ceramide glucosyltransferase (528 aa).

Over 1–6 (MYSFIE) the chain is Lumenal. Residues 7–27 (CIAGALFVLGCVVVTLVVIGV) traverse the membrane as a helical segment. The Cytoplasmic segment spans residues 28–369 (RALLYNFRNR…TVLSATILEP (342 aa)). Position 94 (Asp-94) is a short sequence motif, D1. A short sequence motif (D2) is located at residue Asp-154. A short sequence motif (D3) is located at residue Asp-308. Residue Asp-308 is the Proton acceptor of the active site. Residues 349–353 (RRSRW) carry the (Q/R)XXRW motif. Residues 370–390 (FTECFLFATYMSLAMTTIPVL) form a helical membrane-spanning segment. The Lumenal segment spans residues 391–402 (SQNLGIPKTWNA). The chain crosses the membrane as a helical span at residues 403–423 (TAIAWFTITTLWMLIDYIGYL). At 424 to 457 (RLHSGVTMEVDEHTPYFAKGFKNTGGIKRRPFLE) the chain is on the cytoplasmic side. The chain crosses the membrane as a helical span at residues 458–478 (FLAAWIGREGLAFPVWAYAVV). Residues 479–528 (FGNTVNWRGRLFYIHWDTTVDAVEPREERTREVRTPELERGPSRNKHRVD) lie on the Lumenal side of the membrane. The interval 503–528 (PREERTREVRTPELERGPSRNKHRVD) is disordered.

It belongs to the glycosyltransferase 2 family.

It is found in the golgi apparatus membrane. The enzyme catalyses an N-acylsphing-4-enine + UDP-alpha-D-glucose = a beta-D-glucosyl-(1&lt;-&gt;1')-N-acylsphing-4-enine + UDP + H(+). It participates in lipid metabolism; sphingolipid metabolism. Functionally, catalyzes the final step in the biosynthesis of the membrane lipid glucosylceramide (GluCer), the transfer of glucose to ceramide. Glucosylceramides play important roles in growth, differentiation and pathogenicity. Contribution to fungal pathogenesis is host-dependent. This is Ceramide glucosyltransferase from Gibberella zeae (strain ATCC MYA-4620 / CBS 123657 / FGSC 9075 / NRRL 31084 / PH-1) (Wheat head blight fungus).